The sequence spans 292 residues: Bis(5'-nucleosyl)-tetraphosphatase, symmetrical (292 aa).

This sequence belongs to the Ap4A hydrolase family.

The catalysed reaction is P(1),P(4)-bis(5'-adenosyl) tetraphosphate + H2O = 2 ADP + 2 H(+). Hydrolyzes diadenosine 5',5'''-P1,P4-tetraphosphate to yield ADP. This chain is Bis(5'-nucleosyl)-tetraphosphatase, symmetrical, found in Yersinia enterocolitica serotype O:8 / biotype 1B (strain NCTC 13174 / 8081).